Here is a 399-residue protein sequence, read N- to C-terminus: Phosphoglycerate kinase (399 aa).

Substrate contacts are provided by residues 24 to 26 (DLN), Arg41, 64 to 67 (HLGR), Arg123, and Arg160. Residues Lys210, Gly298, Glu329, and 355-358 (GGDS) each bind ATP.

Belongs to the phosphoglycerate kinase family. As to quaternary structure, monomer.

The protein localises to the cytoplasm. The enzyme catalyses (2R)-3-phosphoglycerate + ATP = (2R)-3-phospho-glyceroyl phosphate + ADP. It functions in the pathway carbohydrate degradation; glycolysis; pyruvate from D-glyceraldehyde 3-phosphate: step 2/5. The polypeptide is Phosphoglycerate kinase (Salinispora arenicola (strain CNS-205)).